We begin with the raw amino-acid sequence, 361 residues long: Phospho-N-acetylmuramoyl-pentapeptide-transferase (361 aa).

10 consecutive transmembrane segments (helical) span residues 26 to 46 (SILAALTALFLSLWIGPVLIQ), 73 to 93 (TMGGSLILMTVTLSVLLWGDL), 98 to 118 (VWLVLVVMLAFGAIGWYDDWI), 139 to 159 (IFGLAAGLFLYFTADVPAAVT), 168 to 188 (IALPLTSISFVAITYFWIVGF), 200 to 220 (GLAIMPTVLVACALGVFAYAS), 237 to 257 (AGDLIIICAAIAGAGLGFLWF), 264 to 284 (VFMGDIGALALGAVLGTIAVI), 289 to 309 (LVLVVMGGVFVIETLSVIIQV), and 339 to 359 (VIVRFWIISVVLVLVGLATLK).

The protein belongs to the glycosyltransferase 4 family. MraY subfamily. Mg(2+) serves as cofactor.

The protein localises to the cell inner membrane. The catalysed reaction is UDP-N-acetyl-alpha-D-muramoyl-L-alanyl-gamma-D-glutamyl-meso-2,6-diaminopimeloyl-D-alanyl-D-alanine + di-trans,octa-cis-undecaprenyl phosphate = di-trans,octa-cis-undecaprenyl diphospho-N-acetyl-alpha-D-muramoyl-L-alanyl-D-glutamyl-meso-2,6-diaminopimeloyl-D-alanyl-D-alanine + UMP. Its pathway is cell wall biogenesis; peptidoglycan biosynthesis. Its function is as follows. Catalyzes the initial step of the lipid cycle reactions in the biosynthesis of the cell wall peptidoglycan: transfers peptidoglycan precursor phospho-MurNAc-pentapeptide from UDP-MurNAc-pentapeptide onto the lipid carrier undecaprenyl phosphate, yielding undecaprenyl-pyrophosphoryl-MurNAc-pentapeptide, known as lipid I. This Xylella fastidiosa (strain M12) protein is Phospho-N-acetylmuramoyl-pentapeptide-transferase.